The chain runs to 229 residues: Small ribosomal subunit protein uS3 (229 aa).

Residues 17–85 (VKEWIKDEVR…NPQVSVDEVE (69 aa)) enclose the KH type-2 domain. Residues 202–229 (LRGESGEDEGDKGDEQGGEAQEAEGAGA) are disordered. Positions 219–229 (GEAQEAEGAGA) are enriched in low complexity.

It belongs to the universal ribosomal protein uS3 family. Part of the 30S ribosomal subunit.

Binds the lower part of the 30S subunit head. The sequence is that of Small ribosomal subunit protein uS3 from Archaeoglobus fulgidus (strain ATCC 49558 / DSM 4304 / JCM 9628 / NBRC 100126 / VC-16).